The sequence spans 136 residues: Large ribosomal subunit protein bL20 (136 aa).

It belongs to the bacterial ribosomal protein bL20 family.

In terms of biological role, binds directly to 23S ribosomal RNA and is necessary for the in vitro assembly process of the 50S ribosomal subunit. It is not involved in the protein synthesizing functions of that subunit. This Tropheryma whipplei (strain Twist) (Whipple's bacillus) protein is Large ribosomal subunit protein bL20.